Here is a 126-residue protein sequence, read N- to C-terminus: Precursor of CEP2 (126 aa).

Positions 1 to 19 (MKLFIITVVTILTISRVFD) are cleaved as a signal peptide. Residues 20-80 (KTPATTEARK…ENNLKNRFIN (61 aa)) constitute a propeptide that is removed on maturation. Pro-84 and Pro-87 each carry hydroxyproline. A propeptide spanning residues 96-105 (PRVLNNKFTN) is cleaved from the precursor. 3 positions are modified to hydroxyproline: Pro-109, Pro-112, and Pro-116. A propeptide spanning residues 121-126 (PGVVNV) is cleaved from the precursor.

It belongs to the C-terminally encoded plant signaling peptide (CEP) family. As to quaternary structure, interacts with CEP receptors (e.g. CEPR1 and CEPR2). Post-translationally, the mature small signaling peptide is generated by proteolytic processing of the longer precursor. Mostly expressed in roots. Present in cotyledons, shoot apical meristem (SAM), leaves, inflorescence stems and flowers.

It localises to the secreted. The protein resides in the extracellular space. The protein localises to the apoplast. In terms of biological role, extracellular signaling peptide that represses primary root growth rate. Negatively regulates the number of leaves and flowering, and modulates leaf morphology. Regulates systemic nitrogen (N)-demand signaling. Mediates up-regulation of genes involved in N uptake and assimilation pathways. The polypeptide is Precursor of CEP2 (Arabidopsis thaliana (Mouse-ear cress)).